Consider the following 87-residue polypeptide: Small ribosomal subunit protein bS20 (87 aa).

The protein belongs to the bacterial ribosomal protein bS20 family.

Its function is as follows. Binds directly to 16S ribosomal RNA. The protein is Small ribosomal subunit protein bS20 of Shigella flexneri.